The chain runs to 261 residues: Chanoclavine-I dehydrogenase easD (261 aa).

NADP(+) contacts are provided by I18, K48, D66, R132, Y166, K170, and T201. The active-site Proton donor is the Y166. Catalysis depends on K170, which acts as the Lowers pKa of active site Tyr.

It belongs to the short-chain dehydrogenases/reductases (SDR) family.

It catalyses the reaction chanoclavine-I + NAD(+) = chanoclavine-I aldehyde + NADH + H(+). It participates in alkaloid biosynthesis; ergot alkaloid biosynthesis. Functionally, chanoclavine-I dehydrogenase; part of the gene cluster that mediates the biosynthesis of fumiclavanine C, a fungal ergot alkaloid. DmaW catalyzes the first step of ergot alkaloid biosynthesis by condensing dimethylallyl diphosphate (DMAP) and tryptophan to form 4-dimethylallyl-L-tryptophan. The second step is catalyzed by the methyltransferase easF that methylates 4-dimethylallyl-L-tryptophan in the presence of S-adenosyl-L-methionine, resulting in the formation of 4-dimethylallyl-L-abrine. The catalase easC and the FAD-dependent oxidoreductase easE then transform 4-dimethylallyl-L-abrine to chanoclavine-I which is further oxidized by EasD in the presence of NAD(+), resulting in the formation of chanoclavine-I aldehyde. EasA reduces chanoclavine-I aldehyde to dihydrochanoclavine-I aldehyde that spontaneously dehydrates to form 6,8-dimethyl-6,7-didehydroergoline. EasG then catalyzes the reduction of 6,8-dimethyl-6,7-didehydroergoline to form festuclavine. Hydrolysis of festuclavine by easM then leads to the formation of fumigaclavine B which is in turn acetylated by easN to fumigaclavine A. Finally, easL catalyzes the conversion of fumigaclavine A into fumigaclavine C by attaching a dimethylallyl moiety to C-2 of the indole nucleus. This Aspergillus fumigatus (strain ATCC MYA-4609 / CBS 101355 / FGSC A1100 / Af293) (Neosartorya fumigata) protein is Chanoclavine-I dehydrogenase easD.